Reading from the N-terminus, the 308-residue chain is CASP-like protein 4A2 (308 aa).

A disordered region spans residues 1 to 135; it reads MALEAQPSPS…APAPAPRVPA (135 aa). Topologically, residues 1–161 are cytoplasmic; that stretch reads MALEAQPSPS…KRPTAVLQRT (161 aa). Residues 22–31 are compositionally biased toward gly residues; the sequence is GGAGAPGGSA. Residues 32 to 44 show a composition bias toward low complexity; sequence GDADAQARRATSG. Pro residues-rich tracts occupy residues 54–65 and 89–132; these read RRSPPPPFPRTP and FQPP…PAPR. Residues 162–182 form a helical membrane-spanning segment; it reads ALVARVAAALLCLAALAVLAA. Residues 183–203 are Extracellular-facing; the sequence is DSRKGFALDSYSNYSQLRYSE. A glycan (N-linked (GlcNAc...) asparagine) is linked at Asn-195. A helical transmembrane segment spans residues 204-224; it reads AVNVIGFVYSVLQFFVLADLM. The Cytoplasmic portion of the chain corresponds to 225–240; sequence RRNKHLNPRRKGDYFD. A helical transmembrane segment spans residues 241–262; sequence FFMDQVLAYLLISSSSSATARV. Topologically, residues 263-280 are extracellular; that stretch reads GDWIDNWGSDPFPKMANS. Residue Asn-279 is glycosylated (N-linked (GlcNAc...) asparagine). Residues 281–301 traverse the membrane as a helical segment; that stretch reads SIAISFMAFLVFAISALISAY. Topologically, residues 302–308 are cytoplasmic; it reads NLFRRDI.

The protein belongs to the Casparian strip membrane proteins (CASP) family. Homodimer and heterodimers.

It is found in the cell membrane. The sequence is that of CASP-like protein 4A2 from Oryza sativa subsp. japonica (Rice).